Reading from the N-terminus, the 178-residue chain is Cell division protein ZapC (178 aa).

The protein belongs to the ZapC family. In terms of assembly, interacts directly with FtsZ.

It localises to the cytoplasm. Contributes to the efficiency of the cell division process by stabilizing the polymeric form of the cell division protein FtsZ. Acts by promoting interactions between FtsZ protofilaments and suppressing the GTPase activity of FtsZ. The sequence is that of Cell division protein ZapC from Pseudoalteromonas atlantica (strain T6c / ATCC BAA-1087).